We begin with the raw amino-acid sequence, 172 residues long: Small ribosomal subunit protein uS5 (172 aa).

Residues 16–79 enclose the S5 DRBM domain; it reads LKEKLVHINR…EDGKKNVVKV (64 aa).

This sequence belongs to the universal ribosomal protein uS5 family. As to quaternary structure, part of the 30S ribosomal subunit. Contacts proteins S4 and S8.

In terms of biological role, with S4 and S12 plays an important role in translational accuracy. Functionally, located at the back of the 30S subunit body where it stabilizes the conformation of the head with respect to the body. The chain is Small ribosomal subunit protein uS5 from Prosthecochloris aestuarii (strain DSM 271 / SK 413).